The sequence spans 743 residues: Tegument protein UL46 homolog (743 aa).

Disordered regions lie at residues 437–481 (GCPP…VSSA), 522–590 (HQRS…SGYM), and 693–743 (RVRL…VSSL). Residues 526 to 552 (DSSSSDNSSCSSTETEYITISSTPSPT) are compositionally biased toward low complexity. 2 stretches are compositionally biased toward polar residues: residues 573–586 (QPANTVSEYSSPAN) and 697–716 (GTTTPTSANEATEKYTTPSS). Positions 722–743 (RTLSTSESPESSPEQQERVSSL) are enriched in low complexity.

It belongs to the herpesviridae HHV-1 VP11/12 protein family. As to quaternary structure, interacts with VP16.

The protein localises to the virion tegument. The protein resides in the host cell membrane. Abundant tegument protein. Trans-activates the immediate early genes. In Equus caballus (Horse), this protein is Tegument protein UL46 homolog.